Reading from the N-terminus, the 302-residue chain is F-box protein SKIP19 (302 aa).

Residues 16 to 63 form the F-box domain; the sequence is STNWTELPPELTSAILHRLGAIEILENAQKVCRSWRRVCKDPSMWRKI.

As to quaternary structure, part of a SCF (ASK-cullin-F-box) protein ligase complex. Interacts with CUL1 and SPK1B/ASK2.

The protein localises to the nucleus. It functions in the pathway protein modification; protein ubiquitination. Functionally, component of SCF(ASK-cullin-F-box) E3 ubiquitin ligase complexes, which may mediate the ubiquitination and subsequent proteasomal degradation of target proteins. In Arabidopsis thaliana (Mouse-ear cress), this protein is F-box protein SKIP19 (SKIP19).